We begin with the raw amino-acid sequence, 658 residues long: Transcription factor cep-1 (658 aa).

The DNA-binding element occupies 238–428; it reads EEWLTFEVKK…RDWKNFCEKR (191 aa). Zn(2+) contacts are provided by cysteine 319, histidine 322, cysteine 375, and cysteine 379. The segment at 450–477 is disordered; sequence QSSLHSGPSSPEKVTDTSQMFQSTSSSS. Low complexity predominate over residues 466-476; it reads TSQMFQSTSSS. The segment at 535 to 564 is required for tertiary structure stability of the protein; sequence QYGLQRQVKLSEKEYSKFVAFFAKEGENEI.

It belongs to the p53 family. As to quaternary structure, homodimer. Interacts (via C-terminus domain) with prmt-5; not methylated by prmt-5. Interacts with cbp-1 (via HAT domain); cep-1 transcriptional activity may be inhibited by interaction with methylated cbp-1. Component of a complex that contains prmt-5 and cbp-1. Interacts with ape-1; the interaction inhibits pro-apoptotic activity of cep-1. It depends on Zn(2+) as a cofactor. Phosphorylated in response to IR-induced DNA damage which is thought to be mediated by akt-1.

Its subcellular location is the nucleus. Transcriptional activator that binds the same DNA consensus sequence as p53. Has a role in normal development to ensure proper meiotic chromosome segregation. Promotes apoptosis under conditions of cellular and genotoxic stress in response to DNA damage, hypoxia, or starvation. However, not required for DNA repair in response to UV-C or to regulate cell-cycle progression. Regulates germline apoptosis in response to DNA damage. Required for induction of ced-13 in response to DNA damage. Its pro-apoptotic activity is inhibited when bound to ape-1 in vitro. Regulates germline proliferation by activating phg-1. Regulates DNA damage-induced apoptosis by inducing transcription of the programmed cell death activator egl-1. Negatively regulates lifespan. In Caenorhabditis briggsae, this protein is Transcription factor cep-1.